A 332-amino-acid polypeptide reads, in one-letter code: Ethylene-responsive transcription factor ERF119 (332 aa).

Residues 1 to 33 (MAERKKRSSIQTNKPNKKPMKKKPFQLNHLPGL) are disordered. Basic residues predominate over residues 15 to 24 (PNKKPMKKKP). A DNA-binding region (AP2/ERF) is located at residues 130–187 (KPVGVRQRKWGKWAAEIRHPITKVRTWLGTYETLEQAADAYATKKLEFDALAAATSAA).

This sequence belongs to the AP2/ERF transcription factor family. ERF subfamily.

The protein resides in the nucleus. In terms of biological role, probably acts as a transcriptional activator. Binds to the GCC-box pathogenesis-related promoter element. May be involved in the regulation of gene expression by stress factors and by components of stress signal transduction pathways. The polypeptide is Ethylene-responsive transcription factor ERF119 (ERF119) (Arabidopsis thaliana (Mouse-ear cress)).